A 266-amino-acid chain; its full sequence is Signal peptidase I (266 aa).

Residues 1 to 20 are Cytoplasmic-facing; that stretch reads MQTDNTKSNTNKTAKQEWGS. The helical transmembrane segment at 21–41 threads the bilayer; it reads FAFVICIALLIRILIMEPFTV. At 42–266 the chain is on the periplasmic side; sequence PTGSMKATIL…IFRNLYSTDE (225 aa). Residues Ser-45 and Lys-108 contribute to the active site.

The protein belongs to the peptidase S26 family.

It localises to the cell inner membrane. The enzyme catalyses Cleavage of hydrophobic, N-terminal signal or leader sequences from secreted and periplasmic proteins.. This is Signal peptidase I (lepB) from Rickettsia felis (strain ATCC VR-1525 / URRWXCal2) (Rickettsia azadi).